Here is a 193-residue protein sequence, read N- to C-terminus: Orotate phosphoribosyltransferase (193 aa).

Residues Arg107, Lys108, Lys111, His113, and Glu133–Ser141 each bind 5-phospho-alpha-D-ribose 1-diphosphate. Orotate-binding residues include Thr137 and Arg165.

The protein belongs to the purine/pyrimidine phosphoribosyltransferase family. PyrE subfamily. In terms of assembly, homodimer. Mg(2+) is required as a cofactor.

It catalyses the reaction orotidine 5'-phosphate + diphosphate = orotate + 5-phospho-alpha-D-ribose 1-diphosphate. It participates in pyrimidine metabolism; UMP biosynthesis via de novo pathway; UMP from orotate: step 1/2. Its function is as follows. Catalyzes the transfer of a ribosyl phosphate group from 5-phosphoribose 1-diphosphate to orotate, leading to the formation of orotidine monophosphate (OMP). This chain is Orotate phosphoribosyltransferase, found in Rhodopirellula baltica (strain DSM 10527 / NCIMB 13988 / SH1).